The chain runs to 152 residues: Ubiquitin-activating enzyme E1 Y (152 aa).

Cys-51 functions as the Glycyl thioester intermediate in the catalytic mechanism.

It belongs to the ubiquitin-activating E1 family. Monomer.

It catalyses the reaction ATP + ubiquitin + [E1 ubiquitin-activating enzyme]-L-cysteine = AMP + diphosphate + S-ubiquitinyl-[E1 ubiquitin-activating enzyme]-L-cysteine.. Its pathway is protein modification; protein ubiquitination. Its function is as follows. Activates ubiquitin by first adenylating its C-terminal glycine residue with ATP, and thereafter linking this residue to the side chain of a cysteine residue in E1, yielding a ubiquitin-E1 thioester and free AMP. The Y chromosome form could be involved in the survival and proliferation of differentiating spermatogonia. The chain is Ubiquitin-activating enzyme E1 Y (UBE1Y) from Osphranter rufus (Red kangaroo).